The chain runs to 222 residues: Pyridoxal phosphate homeostasis protein (222 aa).

N6-(pyridoxal phosphate)lysine is present on K35.

This sequence belongs to the pyridoxal phosphate-binding protein YggS/PROSC family.

Pyridoxal 5'-phosphate (PLP)-binding protein, which is involved in PLP homeostasis. The protein is Pyridoxal phosphate homeostasis protein of Helicobacter pylori (strain ATCC 700392 / 26695) (Campylobacter pylori).